Consider the following 181-residue polypeptide: Trafficking protein particle complex subunit 3-like protein (181 aa).

A lipid anchor (S-palmitoyl cysteine) is attached at Cys-68.

The protein belongs to the TRAPP small subunits family. BET3 subfamily. As to quaternary structure, homodimer. Component of the multisubunit TRAPP (transport protein particle) complex, which includes at least TRAPPC2, TRAPPC2L, TRAPPC3, TRAPPC3L, TRAPPC4, TRAPPC5, TRAPPC8, TRAPPC9, TRAPPC10, TRAPPC11 and TRAPPC12.

It localises to the golgi apparatus. The protein localises to the cis-Golgi network. It is found in the endoplasmic reticulum. In terms of biological role, may play a role in vesicular transport from endoplasmic reticulum to Golgi. In Mus musculus (Mouse), this protein is Trafficking protein particle complex subunit 3-like protein (Trappc3l).